A 158-amino-acid polypeptide reads, in one-letter code: Putative tyrosine-protein phosphatase OCA1 (158 aa).

A Tyrosine-protein phosphatase domain is found at 7–158; that stretch reads NYGMVEENFY…DEELVFGASY (152 aa). Catalysis depends on Cys-99, which acts as the Phosphocysteine intermediate.

Belongs to the protein-tyrosine phosphatase family.

Its subcellular location is the cytoplasm. The enzyme catalyses O-phospho-L-tyrosyl-[protein] + H2O = L-tyrosyl-[protein] + phosphate. In terms of biological role, putative tyrosine-protein phosphatase required for protection against superoxide stress. This Mycosarcoma maydis (Corn smut fungus) protein is Putative tyrosine-protein phosphatase OCA1 (OCA1).